The sequence spans 416 residues: Gamma-glutamyl phosphate reductase (416 aa).

The protein belongs to the gamma-glutamyl phosphate reductase family.

Its subcellular location is the cytoplasm. It catalyses the reaction L-glutamate 5-semialdehyde + phosphate + NADP(+) = L-glutamyl 5-phosphate + NADPH + H(+). The protein operates within amino-acid biosynthesis; L-proline biosynthesis; L-glutamate 5-semialdehyde from L-glutamate: step 2/2. Catalyzes the NADPH-dependent reduction of L-glutamate 5-phosphate into L-glutamate 5-semialdehyde and phosphate. The product spontaneously undergoes cyclization to form 1-pyrroline-5-carboxylate. This Vibrio vulnificus (strain CMCP6) protein is Gamma-glutamyl phosphate reductase.